The sequence spans 323 residues: Methionyl-tRNA formyltransferase (323 aa).

Serine 115–proline 118 contributes to the (6S)-5,6,7,8-tetrahydrofolate binding site.

This sequence belongs to the Fmt family.

It catalyses the reaction L-methionyl-tRNA(fMet) + (6R)-10-formyltetrahydrofolate = N-formyl-L-methionyl-tRNA(fMet) + (6S)-5,6,7,8-tetrahydrofolate + H(+). Its function is as follows. Attaches a formyl group to the free amino group of methionyl-tRNA(fMet). The formyl group appears to play a dual role in the initiator identity of N-formylmethionyl-tRNA by promoting its recognition by IF2 and preventing the misappropriation of this tRNA by the elongation apparatus. The protein is Methionyl-tRNA formyltransferase of Lactococcus lactis subsp. cremoris (strain SK11).